Here is a 689-residue protein sequence, read N- to C-terminus: tRNA 5-methylaminomethyl-2-thiouridine biosynthesis bifunctional protein MnmC (689 aa).

The tract at residues 1 to 245 is tRNA (mnm(5)s(2)U34)-methyltransferase; that stretch reads MNQRPIQTAT…KREMLTGTLP (245 aa). An FAD-dependent cmnm(5)s(2)U34 oxidoreductase region spans residues 270 to 689; it reads IGGGIVSALT…RSPATQESSR (420 aa).

The protein in the N-terminal section; belongs to the methyltransferase superfamily. tRNA (mnm(5)s(2)U34)-methyltransferase family. This sequence in the C-terminal section; belongs to the DAO family. The cofactor is FAD.

The protein localises to the cytoplasm. The catalysed reaction is 5-aminomethyl-2-thiouridine(34) in tRNA + S-adenosyl-L-methionine = 5-methylaminomethyl-2-thiouridine(34) in tRNA + S-adenosyl-L-homocysteine + H(+). Its function is as follows. Catalyzes the last two steps in the biosynthesis of 5-methylaminomethyl-2-thiouridine (mnm(5)s(2)U) at the wobble position (U34) in tRNA. Catalyzes the FAD-dependent demodification of cmnm(5)s(2)U34 to nm(5)s(2)U34, followed by the transfer of a methyl group from S-adenosyl-L-methionine to nm(5)s(2)U34, to form mnm(5)s(2)U34. This Yersinia pseudotuberculosis serotype O:1b (strain IP 31758) protein is tRNA 5-methylaminomethyl-2-thiouridine biosynthesis bifunctional protein MnmC.